A 205-amino-acid polypeptide reads, in one-letter code: Holliday junction branch migration complex subunit RuvA (205 aa).

Residues 1–65 (MIAKLKGILD…EDRIHLFGFL (65 aa)) are domain I. The tract at residues 66–144 (DNTEKVAFNM…NINTIANNTS (79 aa)) is domain II. The interval 145–153 (LAILSTDSN) is flexible linker. The domain III stretch occupies residues 154–205 (THDNILSDAITALIALGISRAEATQILSDIYALFPSISVNELVRTALQRRAK).

Belongs to the RuvA family. In terms of assembly, homotetramer. Forms an RuvA(8)-RuvB(12)-Holliday junction (HJ) complex. HJ DNA is sandwiched between 2 RuvA tetramers; dsDNA enters through RuvA and exits via RuvB. An RuvB hexamer assembles on each DNA strand where it exits the tetramer. Each RuvB hexamer is contacted by two RuvA subunits (via domain III) on 2 adjacent RuvB subunits; this complex drives branch migration. In the full resolvosome a probable DNA-RuvA(4)-RuvB(12)-RuvC(2) complex forms which resolves the HJ.

Its subcellular location is the cytoplasm. Its function is as follows. The RuvA-RuvB-RuvC complex processes Holliday junction (HJ) DNA during genetic recombination and DNA repair, while the RuvA-RuvB complex plays an important role in the rescue of blocked DNA replication forks via replication fork reversal (RFR). RuvA specifically binds to HJ cruciform DNA, conferring on it an open structure. The RuvB hexamer acts as an ATP-dependent pump, pulling dsDNA into and through the RuvAB complex. HJ branch migration allows RuvC to scan DNA until it finds its consensus sequence, where it cleaves and resolves the cruciform DNA. The protein is Holliday junction branch migration complex subunit RuvA of Orientia tsutsugamushi (strain Boryong) (Rickettsia tsutsugamushi).